We begin with the raw amino-acid sequence, 418 residues long: Gamma-glutamyl phosphate reductase (418 aa).

This sequence belongs to the gamma-glutamyl phosphate reductase family.

The protein resides in the cytoplasm. It catalyses the reaction L-glutamate 5-semialdehyde + phosphate + NADP(+) = L-glutamyl 5-phosphate + NADPH + H(+). It functions in the pathway amino-acid biosynthesis; L-proline biosynthesis; L-glutamate 5-semialdehyde from L-glutamate: step 2/2. Its function is as follows. Catalyzes the NADPH-dependent reduction of L-glutamate 5-phosphate into L-glutamate 5-semialdehyde and phosphate. The product spontaneously undergoes cyclization to form 1-pyrroline-5-carboxylate. This Lacticaseibacillus paracasei (strain ATCC 334 / BCRC 17002 / CCUG 31169 / CIP 107868 / KCTC 3260 / NRRL B-441) (Lactobacillus paracasei) protein is Gamma-glutamyl phosphate reductase.